Here is a 419-residue protein sequence, read N- to C-terminus: MAQEVFQRTKPHVNIGTIGHVDHGKTTLTAAITMTLAVNSTCTPKKYDEIDAAPEERARGITINTAHVEYETASRHYAHVDCPGHADYIKNMITGAAQMDGAILVVSAADGPMPQTKEHILLAKQVGVPSIVVFLNKEDQVDDEEILQLVDLEVRESLINYEFPGDKVPVVAGSALMALQALTEKPNTLRGENKWVDKIYELMDAVDSYIPTPKRDIEKPFLMPIEDVFSIQGRGTVATGRIERGILKLGDIVELIGLNEKIRSTVVTGLEMFRRLLEQGFAGENIGVLLRGIEKKDIERGMVIAQPGTIEPHTRFEAQVYILRKEEGGRHSPFFAGYRPQFFVRTADVTGVIEAFEYDNGDKTRMVMPGDRVKMIVNLICPIAIEKKMRFAIREGGRTIGAGVVLQILDSTQLKSKNK.

Residues 10 to 214 form the tr-type G domain; that stretch reads KPHVNIGTIG…AVDSYIPTPK (205 aa). The G1 stretch occupies residues 19 to 26; sequence GHVDHGKT. A GTP-binding site is contributed by 19 to 26; it reads GHVDHGKT. Threonine 26 serves as a coordination point for Mg(2+). The tract at residues 60–64 is G2; sequence GITIN. A G3 region spans residues 81–84; that stretch reads DCPG. Residues 81–85 and 136–139 each bind GTP; these read DCPGH and NKED. A G4 region spans residues 136 to 139; sequence NKED. The segment at 174–176 is G5; the sequence is SAL.

This sequence belongs to the TRAFAC class translation factor GTPase superfamily. Classic translation factor GTPase family. EF-Tu/EF-1A subfamily.

It is found in the plastid. It localises to the chloroplast. The catalysed reaction is GTP + H2O = GDP + phosphate + H(+). In terms of biological role, GTP hydrolase that promotes the GTP-dependent binding of aminoacyl-tRNA to the A-site of ribosomes during protein biosynthesis. The polypeptide is Elongation factor Tu, chloroplastic (tufA) (Chara vulgaris (Common stonewort)).